The chain runs to 442 residues: Proline--tRNA ligase (442 aa).

Belongs to the class-II aminoacyl-tRNA synthetase family. ProS type 2 subfamily. In terms of assembly, homodimer.

The protein localises to the cytoplasm. It carries out the reaction tRNA(Pro) + L-proline + ATP = L-prolyl-tRNA(Pro) + AMP + diphosphate. Functionally, catalyzes the attachment of proline to tRNA(Pro) in a two-step reaction: proline is first activated by ATP to form Pro-AMP and then transferred to the acceptor end of tRNA(Pro). This chain is Proline--tRNA ligase, found in Brucella abortus (strain S19).